Consider the following 198-residue polypeptide: MRQFIVIGHDVPTDPDAVSLADLPGAGRLDVLCRCLNSAFFLSHDLRDNVRVWLVVGDEYAIRFEGSELRRLNPDERSTAALVRGALAAREKAIGSMAANPSPGVYIRTQSLSGLLESVADDGPLVTLHEDGQPVVDIDPSAEPTFVLSDHHSFDDAETALLAAHADRRVSLGPEPLHADHAITVAHNYLDTDGYNRY.

Position 128 (Leu128) interacts with S-adenosyl-L-methionine.

This sequence belongs to the methyltransferase superfamily. TrmY family. Homodimer.

Its subcellular location is the cytoplasm. It catalyses the reaction pseudouridine(54) in tRNA + S-adenosyl-L-methionine = N(1)-methylpseudouridine(54) in tRNA + S-adenosyl-L-homocysteine + H(+). Specifically catalyzes the N1-methylation of pseudouridine at position 54 (Psi54) in tRNAs. This chain is tRNA (pseudouridine(54)-N(1))-methyltransferase, found in Natronomonas pharaonis (strain ATCC 35678 / DSM 2160 / CIP 103997 / JCM 8858 / NBRC 14720 / NCIMB 2260 / Gabara) (Halobacterium pharaonis).